The following is a 488-amino-acid chain: Regulatory protein ViaA (488 aa).

This sequence belongs to the ViaA family. In terms of assembly, homodimer. Interacts with RavA.

The protein resides in the cytoplasm. Component of the RavA-ViaA chaperone complex, which may act on the membrane to optimize the function of some of the respiratory chains. ViaA stimulates the ATPase activity of RavA. This is Regulatory protein ViaA from Yersinia pseudotuberculosis serotype O:1b (strain IP 31758).